The sequence spans 345 residues: Phosphoribosylformylglycinamidine cyclo-ligase (345 aa).

This sequence belongs to the AIR synthase family.

Its subcellular location is the cytoplasm. The enzyme catalyses 2-formamido-N(1)-(5-O-phospho-beta-D-ribosyl)acetamidine + ATP = 5-amino-1-(5-phospho-beta-D-ribosyl)imidazole + ADP + phosphate + H(+). Its pathway is purine metabolism; IMP biosynthesis via de novo pathway; 5-amino-1-(5-phospho-D-ribosyl)imidazole from N(2)-formyl-N(1)-(5-phospho-D-ribosyl)glycinamide: step 2/2. This chain is Phosphoribosylformylglycinamidine cyclo-ligase, found in Aeromonas salmonicida (strain A449).